A 488-amino-acid polypeptide reads, in one-letter code: Palmitoleoyl-protein carboxylesterase notum1 (488 aa).

Positions 1 to 20 (MAGALCVTLLLLLSTNTVSG) are cleaved as a signal peptide. N-linked (GlcNAc...) asparagine glycosylation is present at asparagine 90. Residues serine 226, aspartate 334, and histidine 383 each act as charge relay system in the active site.

The protein belongs to the pectinacetylesterase family. Notum subfamily. Expressed in the egg and through cleavage to gastrulation stages. Enriched in the animal (prospective ectoderm) and dorsal regions in early gastrula. Shows a dynamic expression during embryogenesis, in particular during neural induction and antero-posterior (AP) patterning.

It localises to the secreted. It carries out the reaction [Wnt protein]-O-(9Z)-hexadecenoyl-L-serine + H2O = [Wnt protein]-L-serine + (9Z)-hexadecenoate + H(+). Functionally, carboxylesterase that acts as a key negative regulator of the Wnt signaling pathway by specifically mediating depalmitoleoylation of WNT proteins. Serine palmitoleoylation of WNT proteins is required for efficient binding to frizzled receptors. Functions in the prospective ectoderm and is required for neural induction. The protein is Palmitoleoyl-protein carboxylesterase notum1 of Xenopus laevis (African clawed frog).